Here is a 426-residue protein sequence, read N- to C-terminus: Pyruvate, phosphate dikinase regulatory protein, chloroplastic (426 aa).

A chloroplast-targeting transit peptide spans 1–41 (MIGCAKPLAAPLQAWARPPSPAGRRLPPSFCAPDTSPALTR). 2 disordered regions span residues 1 to 76 (MIGC…HLDR) and 94 to 124 (AALS…DGED). The span at 94-119 (AALSSASVSAPPVIKSPRPEDAAVAA) shows a compositional bias: low complexity. ADP is bound at residue 153–160 (HSVNAALG).

It belongs to the pyruvate, phosphate/water dikinase regulatory protein family. PDRP subfamily. As to quaternary structure, homodimer at pH 7.5 and homotetramer at pH 8.3. Requires Mg(2+) as cofactor. As to expression, leaf mesophyll-cells.

The protein resides in the plastid. It is found in the chloroplast stroma. It carries out the reaction N(tele)-phospho-L-histidyl/L-threonyl-[pyruvate, phosphate dikinase] + ADP = N(tele)-phospho-L-histidyl/O-phospho-L-threonyl-[pyruvate, phosphate dikinase] + AMP + H(+). The catalysed reaction is N(tele)-phospho-L-histidyl/O-phospho-L-threonyl-[pyruvate, phosphate dikinase] + phosphate + H(+) = N(tele)-phospho-L-histidyl/L-threonyl-[pyruvate, phosphate dikinase] + diphosphate. It functions in the pathway photosynthesis; C4 acid pathway. With respect to regulation, regulated by light/dark exposure. Bifunctional serine/threonine kinase and phosphorylase involved in the dark/light-mediated regulation of PPDK by catalyzing its phosphorylation/dephosphorylation. Dark/light-induced changes in stromal concentrations of the competing ADP and Pi substrates govern the direction of the reaction. In the dark, phosphorylates the catalytic intermediate of PPDK (PPDK-HisP), inactivating it. Light exposure induces the phosphorolysis reaction that reactivates PPDK. Phosphorylates PPDK at both Ser-528 and Thr-527. Can use ADP as a high specificity substrate and GDP as a lower affinity substrate, but has no activity with UDP. This Zea mays (Maize) protein is Pyruvate, phosphate dikinase regulatory protein, chloroplastic (PDRP1).